The primary structure comprises 113 residues: Ribonuclease P protein component (113 aa).

Belongs to the RnpA family. Consists of a catalytic RNA component (M1 or rnpB) and a protein subunit.

It catalyses the reaction Endonucleolytic cleavage of RNA, removing 5'-extranucleotides from tRNA precursor.. RNaseP catalyzes the removal of the 5'-leader sequence from pre-tRNA to produce the mature 5'-terminus. It can also cleave other RNA substrates such as 4.5S RNA. The protein component plays an auxiliary but essential role in vivo by binding to the 5'-leader sequence and broadening the substrate specificity of the ribozyme. This Desulforamulus reducens (strain ATCC BAA-1160 / DSM 100696 / MI-1) (Desulfotomaculum reducens) protein is Ribonuclease P protein component.